Consider the following 320-residue polypeptide: Cytochrome f (320 aa).

An N-terminal signal peptide occupies residues 1-35 (MQTKNTFSWIKKEIIRSISVSLMIYIIARTSISNA). Residues Tyr36, Cys56, Cys59, and His60 each contribute to the heme site. Residues 286 to 306 (VQGLLFFLASVILAQIFLVLK) form a helical membrane-spanning segment.

This sequence belongs to the cytochrome f family. As to quaternary structure, the 4 large subunits of the cytochrome b6-f complex are cytochrome b6, subunit IV (17 kDa polypeptide, petD), cytochrome f and the Rieske protein, while the 4 small subunits are PetG, PetL, PetM and PetN. The complex functions as a dimer. Heme serves as cofactor.

The protein resides in the plastid. It localises to the chloroplast thylakoid membrane. In terms of biological role, component of the cytochrome b6-f complex, which mediates electron transfer between photosystem II (PSII) and photosystem I (PSI), cyclic electron flow around PSI, and state transitions. The polypeptide is Cytochrome f (Eucalyptus globulus subsp. globulus (Tasmanian blue gum)).